Here is a 618-residue protein sequence, read N- to C-terminus: MTQEYDNKRPVLVLQNEALYPQRRSYTSEDEAWKSFLENPLTAATKAMMSINGDEDSAAALGLLYDYYKVPRERRSSTAKPEVEHPEPDHSKRNSIPIVTEQPLISAGENRVQVLKNVPFNIVLPHGNQLGIDKRGHLTAPDTTVTVSIATMPTHSIKTETQPHGFAVGIPPAVYHPEPTERVVVFDRNLNTDQFSSGAQAPNAQRRTPDSTFSETFKEGVQEVFFPSDLSLRMPGMNSEDYVFDSVSGNNFEYTLEASKSLRQKPGDSTMTYLNKGQFYPITLKEVSSSEGIHHPISKVRSVIMVVFAEDKSREDQLRHWKYWHSRQHTAKQRCIDIADYKESFNTISNIEEIAYNAISFTWDINDEAKVFISVNCLSTDFSSQKGVKGLPLNIQVDTYSYNNRSNKPVHRAYCQIKVFCDKGAERKIRDEERKQSKRKVSDVKVPLLPSHKRMDITVFKPFIDLDTQPVLFIPDVHFANLQRGTHVLPIASEELEGEGSVLKRGPYGTEDDFAVPPSTKLARIEEPKRVLLYVRKESEEVFDALMLKTPSLKGLMEAISDKYDVPHDKIGKIFKKCKKGILVNMDDNIVKHYSNEDTFQLQIEEAGGSYKLTLTEI.

Positions 1 to 91 (MTQEYDNKRP…EVEHPEPDHS (91 aa)) are transcription activation. Residues 74-92 (RRSSTAKPEVEHPEPDHSK) show a composition bias toward basic and acidic residues. A disordered region spans residues 74 to 94 (RRSSTAKPEVEHPEPDHSKRN). Position 208 is a phosphothreonine (threonine 208). Residues 248–474 (SGNNFEYTLE…DLDTQPVLFI (227 aa)) enclose the Grh/CP2 DB domain. Interaction with DNA stretches follow at residues 380–389 (TDFSSQKGVK) and 427–430 (RKIR).

Belongs to the grh/CP2 family. Grainyhead subfamily. As to quaternary structure, binds DNA as homodimer. Homodimer, also forms heterodimers with GRHL2 or GRHL3. Post-translationally, methylation at Arg-9 and Lys-116 may be involved in regulating transcriptional activation. Isoform 1 is highly expressed in brain, pancreas, tonsil, placenta and kidney. Isoform 2 is highly expressed in brain and liver. Expressed at very low levels in non-steroidogenic cells.

The protein localises to the nucleus. Transcription factor involved in epithelial development. Binds directly to the consensus DNA sequence 5'-AACCGGTT-3'. Important regulator of DSG1 in the context of hair anchorage and epidermal differentiation, participates in the maintenance of the skin barrier. There is no genetic interaction with GRHL3, nor functional cooperativity due to diverse target gene selectivity during epithelia development. May play a role in regulating glucose homeostasis and insulin signaling. Functionally, functions as a transcription activator. In terms of biological role, may function as a repressor in tissues where both isoform 1 and isoform 2 are expressed. The sequence is that of Grainyhead-like protein 1 homolog from Homo sapiens (Human).